Here is a 273-residue protein sequence, read N- to C-terminus: Protein FAM216A (273 aa).

The segment at 1–47 (MLGQLLPHTARGLGAAEMPGQGPGSDWTERSSSAEPPAVAGTEGGGG) is disordered.

This sequence belongs to the FAM216 family.

The sequence is that of Protein FAM216A (FAM216A) from Homo sapiens (Human).